The following is a 305-amino-acid chain: LysM and putative peptidoglycan-binding domain-containing protein 3 (305 aa).

Over 1 to 221 (MTGRNQHNGF…PYYGADWGMR (221 aa)) the chain is Extracellular. Asn-29 carries an N-linked (GlcNAc...) asparagine glycan. Positions 31-60 (SETEYSEEDGEAFELRSRGRERHHRSTSRD) are disordered. In terms of domain architecture, LysM spans 68–112 (LIREIKEGDTLISISLQYFCTVADIKRANNLLTEQDFFALRSLRI). Polar residues predominate over residues 121–144 (TETHNTAPHKSSSPSGTCRITETP). Residues 121-156 (TETHNTAPHKSSSPSGTCRITETPVSGASLDSTSSS) are disordered. Positions 146–156 (SGASLDSTSSS) are enriched in low complexity. A helical membrane pass occupies residues 222–242 (WWTAVAIMLVVGIVTPVFYLL). Residues 243-305 (YYEVLMKADV…QHHVKHQEET (63 aa)) are Cytoplasmic-facing.

The protein resides in the cell membrane. It localises to the golgi apparatus. In terms of biological role, essential for Golgi structural integrity. This Danio rerio (Zebrafish) protein is LysM and putative peptidoglycan-binding domain-containing protein 3 (lysmd3).